Reading from the N-terminus, the 165-residue chain is MTPQPPLSAAGLPYRQGVGIMLINARGQVFVARRLDSPEAWQMPQGGIDAGEDPETAAWREMEEEIGTRNALLLGETAGWLGYDLPEELRGRLWGGRFQGQRQKWFAFRFTGQDADINLATAHPEFDAWRWVDVDTLVALIVPFKRPVYEQVVAELAGFAVPQPA.

Residues 13-154 (PYRQGVGIML…KRPVYEQVVA (142 aa)) enclose the Nudix hydrolase domain. Residues 46 to 67 (GGIDAGEDPETAAWREMEEEIG) carry the Nudix box motif.

It belongs to the Nudix hydrolase family. RppH subfamily. The cofactor is a divalent metal cation.

Accelerates the degradation of transcripts by removing pyrophosphate from the 5'-end of triphosphorylated RNA, leading to a more labile monophosphorylated state that can stimulate subsequent ribonuclease cleavage. The polypeptide is RNA pyrophosphohydrolase (Rhodospirillum rubrum (strain ATCC 11170 / ATH 1.1.1 / DSM 467 / LMG 4362 / NCIMB 8255 / S1)).